A 242-amino-acid chain; its full sequence is NAD-dependent protein deacetylase 1 (242 aa).

The Deacetylase sirtuin-type domain occupies 1-242 (MTITSWLAAS…LNEQLAEVDP (242 aa)). NAD(+)-binding residues include A19, T23, F30, R31, Q97, V99, D100, and H115. Residue F30 coordinates nicotinamide. 2 residues coordinate nicotinamide: V99 and D100. H115 acts as the Proton acceptor in catalysis. Zn(2+) is bound by residues C123, C126, C142, and C144. NAD(+) is bound by residues S182, S183, N207, and I226.

It belongs to the sirtuin family. Class U subfamily. It depends on Zn(2+) as a cofactor.

Its subcellular location is the cytoplasm. It catalyses the reaction N(6)-acetyl-L-lysyl-[protein] + NAD(+) + H2O = 2''-O-acetyl-ADP-D-ribose + nicotinamide + L-lysyl-[protein]. Its function is as follows. NAD-dependent protein deacetylase which modulates the activities of several enzymes which are inactive in their acetylated form. The polypeptide is NAD-dependent protein deacetylase 1 (Geobacillus kaustophilus (strain HTA426)).